A 305-amino-acid chain; its full sequence is Oxidoreductase OpS7 (305 aa).

The protein belongs to the oxidoreductase OpS7 family.

Its pathway is secondary metabolite biosynthesis. Functionally, oxidoreductase; part of the gene cluster that mediates the biosynthesis of the bibenzoquinone oosporein, a metabolite required for fungal virulence that acts by evading host immunity to facilitate fungal multiplication in insects. The non-reducing polyketide synthase OpS1 produces orsellinic acid by condensing acetyl-CoA with 3 malonyl-CoA units. Orsellinic acid is then hydroxylated to benzenetriol by the hydroxylase OpS4. The intermediate is oxidized either nonenzymatically to 5,5'-dideoxy-oosporein or enzymatically to benzenetetrol by the oxidoreductase OpS7. The latter is further dimerized to oosporein by the catalase OpS5. OpS6 probably functions en route for protecting cells against oxidative stress by scavenging any leaked free radical form of benzenetetrol by activating the thiol group of glutathione. In Beauveria bassiana (strain ARSEF 2860) (White muscardine disease fungus), this protein is Oxidoreductase OpS7.